The following is a 356-amino-acid chain: MSDQPGTSRPPLRAEPTPTKTATRRRARPIAIPSDETPRNEVTFLRPSEVPQRKPLPEYREPQPRKTVPKNVPLEDLHNYHREECLNVSIPHFINTEDLIKESQRVNGLISFRSTNFVDPSVILKEIKKKEEETVTLMDNDKNSIIDIVGDGINYEKLKKVEKSLCQIDIITEFMNRSRHLQGKKVNGCIMRIDETKQLLFHVIIDGPVGSIYEGGTFFADINIQPYQNHSLIPRVCFHTFIFHPNLGKYGNWDMRGIQWERRSNLEVLYNFIVEGMRNVKYDIERRNLAQLEDMSQPNISRLAKEDWPKFERTAREFVMKMAGGTINGRKTIFAETKKRRRQDFLDEDIDVIGIS.

The interval 1–83 (MSDQPGTSRP…LEDLHNYHRE (83 aa)) is disordered. Over residues 18–32 (PTKTATRRRARPIAI) the composition is skewed to polar residues. Basic and acidic residues predominate over residues 63-76 (QPRKTVPKNVPLED). Positions 169-324 (DIITEFMNRS…AREFVMKMAG (156 aa)) constitute a UBC core domain.

Belongs to the ubiquitin-conjugating enzyme family. In terms of assembly, may interact with pmk-3. Expressed ubiquitously.

It localises to the nucleus. The protein resides in the cytoplasm. The protein localises to the cell projection. Its subcellular location is the dendrite. It is found in the axon. It localises to the cilium. In terms of biological role, possible negative regulator of polyubiquitination. May modulate the activity of the p38 MAP kinase pnk-3. May have a role in axon termination and synaptic transmission at motor and mechanosensory neurons. Plays a role in intraflagellar transport in cilia and cilium length regulation. The protein is Ubiquitin-conjugating enzyme E2 variant 3 of Caenorhabditis elegans.